The chain runs to 364 residues: Ribosomal RNA large subunit methyltransferase M (364 aa).

Residues serine 187, cysteine 220–glycine 223, aspartate 239, aspartate 259, and aspartate 276 contribute to the S-adenosyl-L-methionine site. Catalysis depends on lysine 305, which acts as the Proton acceptor.

This sequence belongs to the class I-like SAM-binding methyltransferase superfamily. RNA methyltransferase RlmE family. RlmM subfamily. In terms of assembly, monomer.

It localises to the cytoplasm. The catalysed reaction is cytidine(2498) in 23S rRNA + S-adenosyl-L-methionine = 2'-O-methylcytidine(2498) in 23S rRNA + S-adenosyl-L-homocysteine + H(+). In terms of biological role, catalyzes the 2'-O-methylation at nucleotide C2498 in 23S rRNA. The chain is Ribosomal RNA large subunit methyltransferase M from Aeromonas hydrophila subsp. hydrophila (strain ATCC 7966 / DSM 30187 / BCRC 13018 / CCUG 14551 / JCM 1027 / KCTC 2358 / NCIMB 9240 / NCTC 8049).